The sequence spans 1284 residues: 1,6-alpha-glucosyltransferase (1284 aa).

The signal sequence occupies residues 1–35; the sequence is MRPPNKEIPRILAFFTAFTLFGSTLALLPAPPAHA. Aspartate 433 serves as the catalytic Nucleophile. The active site involves aspartate 436. The active-site Proton donor is the aspartate 495. CBM6 domains lie at 856–988 and 994–1120; these read SQYE…ITVP and GKYE…LLLS.

It belongs to the glycosyl hydrolase 31 family.

The protein localises to the secreted. It carries out the reaction 2 D-maltotetraose = alpha-isomaltosyl-(1-&gt;4)-D-maltotriose + D-maltotriose. The catalysed reaction is Transfers an alpha-D-glucosyl residue in a (1-&gt;4)-alpha-D-glucan to the primary hydroxy group of glucose, free or combined in a (1-&gt;4)-alpha-D-glucan.. Its activity is regulated as follows. Strongly activated and stabilized by various divalent cations. Strongly inhibited by Cu(2+), Hg(2+) and EDTA, and moderately inhibited by Tris. Its function is as follows. Glycosyltransferase involved, together with CtsY, in the conversion of alpha-1,4-glucan into a cyclic tetrasaccharide (CTS) constructed from four alpha-glucopyranosyl residues. Catalyzes an intermolecular transglucosylation in which a glucose residue at the non-reducing end of maltotetraose is transferred to the 6-OH of an other non-reducing glucose, leading to the formation of alpha-isomaltosyl-(1-&gt;4)-D-maltotriose. Has a wide substrate specificity, and acts on oligosaccharides with alpha-1,4-glucosidic linkages at the non-reducing end, except for maltose. In contrast, has little activity toward oligosaccharides with alpha-1,6-glucosidic linkages at the non-reducing end. The protein is 1,6-alpha-glucosyltransferase of Sporosarcina globispora (Bacillus globisporus).